A 443-amino-acid polypeptide reads, in one-letter code: Fatty acid desaturase 3 (443 aa).

At 1–130 (MGGVGEPDWE…EDMKLFEAKP (130 aa)) the chain is on the cytoplasmic side. Positions 18–95 (LPTLRWEQVR…LQPLLIGELA (78 aa)) constitute a Cytochrome b5 heme-binding domain. Residues 131 to 151 (AFFGLLLGHILAMEVLAWLMI) traverse the membrane as a helical segment. A topological domain (lumenal) is located at residue Y152. Residues 153–173 (MLGPGWVPSTLAALILAISQA) traverse the membrane as a helical segment. Topologically, residues 174–259 (QSWCLQHDLG…KKKRRYLPYN (86 aa)) are cytoplasmic. The short motif at 180 to 184 (HDLGH) is the Histidine box-1 element. A Histidine box-2 motif is present at residues 217–221 (HFQHH). Residues 260–280 (HQHLYFFLIGPPLLTLVNFEV) traverse the membrane as a helical segment. Over 281–282 (EN) the chain is Lumenal. Residues 283-303 (LAYMLVCMQWMDLLWAASFYA) traverse the membrane as a helical segment. A topological domain (cytoplasmic) is located at residue R304. The chain crosses the membrane as a helical span at residues 305 to 325 (FLLSYIPFYGIPGALLLFVAV). The Lumenal portion of the chain corresponds to 326-443 (RVLESHWFVW…NVWLEAYLHQ (118 aa)). The Histidine box-3 signature appears at 381-385 (QIEHH).

Belongs to the fatty acid desaturase type 1 family.

The protein localises to the endoplasmic reticulum membrane. The catalysed reaction is an N-acylsphing-4-enine + 2 Fe(II)-[cytochrome b5] + O2 + 2 H(+) = an N-acyl-sphinga-4E,14Z-dienine + 2 Fe(III)-[cytochrome b5] + 2 H2O. The enzyme catalyses N-(hexanoyl)sphing-4-enine + 2 Fe(II)-[cytochrome b5] + O2 + 2 H(+) = N-hexanoyl-sphinga-4E,14Z-dienine + 2 Fe(III)-[cytochrome b5] + 2 H2O. It catalyses the reaction sphing-4-enine + 2 Fe(II)-[cytochrome b5] + O2 + 2 H(+) = sphinga-4E,14Z-dienine + 2 Fe(III)-[cytochrome b5] + 2 H2O. It carries out the reaction (11E)-octadecenoyl-CoA + 2 Fe(II)-[cytochrome b5] + O2 + 2 H(+) = (11E,13Z)-octadecadienoyl-CoA + 2 Fe(III)-[cytochrome b5] + 2 H2O. The catalysed reaction is N-acyl-1-deoxysphinganine + 2 Fe(II)-[cytochrome b5] + O2 + 2 H(+) = N-acyl-1-deoxysphing-14Z-enine + 2 Fe(III)-[cytochrome b5] + 2 H2O. The enzyme catalyses an N-acylsphinganine + 2 Fe(II)-[cytochrome b5] + O2 + 2 H(+) = an N-acylsphing-14Z-enine + 2 Fe(III)-[cytochrome b5] + 2 H2O. The protein operates within lipid metabolism; polyunsaturated fatty acid biosynthesis. It participates in lipid metabolism; sphingolipid metabolism. Functionally, mammals have different sphingoid bases that differ in their length and/or pattern of desaturation and hydroxyl groups. The predominant sphingoid base that comprises mammalian ceramides is sphing-4-enine (sphingosine or SPH) which has a trans (E) desaturation at carbon 4. FADS3 is a desaturase that introduces a cis (Z) double bond between carbon 14 and carbon 15 of the sphingoid base (also known as long chain base, LCB), producing LCBs such as sphinga-4,14-dienine (SPD, d18:2(4E,14Z)) from SPH. Prefers SPH-containing ceramides (N-acylsphing-4-enines) as substrates. Capable of metabolizing also the SPH in its free form. SPD ceramides occur widely in mammalian tissues and cells. Due to their unusual structure containing a cis double bond, SPD ceramides may have an opposite, negative role in lipid microdomain formation relative to conventional ceramides. Could be involved in the detoxification of 1-deoxy sphingolipids, by desaturating the cytotoxic 1-deoxysphinganine (1-deoxySA, m18:0), produced under pathological conditions, to 1-deoxysphingenine (1-deoxysphingosine, 1-deoxySO, m18:1). Although prefers SPH-containing ceramides (N-acylsphing-4-enines) as substrates, it also exhibits activity toward dihydrosphingosine-containing CERs (N-acylsphinganines) and produces 14Z-SPH-containing sphingolipids. Its desaturase mechanism involves an electron transfer facilitated by cytochrome b5. FADS3 also acts as a methyl-end fatty acyl coenzyme A (CoA) desaturase that introduces a cis double bond between the preexisting double bond and the terminal methyl group of the fatty acyl chain. Desaturates (11E)-octadecenoate (trans-vaccenoate, the predominant trans fatty acid in human milk) at carbon 13 to generate (11E,13Z)-octadecadienoate (also known as conjugated linoleic acid 11E,13Z-CLA). The chain is Fatty acid desaturase 3 from Bos taurus (Bovine).